A 1486-amino-acid chain; its full sequence is Chromosome partition protein MukB (1486 aa).

Residue 34 to 41 coordinates ATP; that stretch reads GGNGAGKS. Coiled-coil stretches lie at residues 326–418, 444–480, and 509–603; these read LEAD…QYNQ, LETF…QAYQ, and RHLA…RAPV. Positions 666–783 are flexible hinge; the sequence is PGGSEDQRLN…EVPLFGRAAR (118 aa). Coiled-coil stretches lie at residues 835 to 923, 977 to 1115, and 1209 to 1266; these read EAEI…AKLE, EMLS…TAKA, and VEAI…QNVS.

It belongs to the SMC family. MukB subfamily. Homodimerization via its hinge domain. Binds to DNA via its C-terminal region. Interacts, and probably forms a ternary complex, with MukE and MukF via its C-terminal region. The complex formation is stimulated by calcium or magnesium. Interacts with tubulin-related protein FtsZ.

The protein localises to the cytoplasm. Its subcellular location is the nucleoid. Functionally, plays a central role in chromosome condensation, segregation and cell cycle progression. Functions as a homodimer, which is essential for chromosome partition. Involved in negative DNA supercoiling in vivo, and by this means organize and compact chromosomes. May achieve or facilitate chromosome segregation by condensation DNA from both sides of a centrally located replisome during cell division. This is Chromosome partition protein MukB from Shigella boydii serotype 18 (strain CDC 3083-94 / BS512).